The primary structure comprises 348 residues: MVSEAPPFWWQKAGWQAWLLSPFSLLYGKVAGRRMRTAKRANVPVPVICIGNFTVGGAGKTPTAIAIARAAVARGMKPGFLSRGYGGTLDVTTLVDAQHHRAAAVGDEPLLLAREAVTVISRRRVEGAHRLVKEGVNLIIMDDGFQSARLTLDYALVVIDTVRGIGNGHLVPGGPVRAPLAEQMRQMTGLLKVGKGHAADPLVRQAAKAAKPVFVAAIMPQEPEDFRGKRVLAFAGIADPAKFYRTVEALGGDIVLSRSFPDHHHFSDDEIDDLLKDARKENLQLVTTAKDAVRLNGHHGRAEELLWNSQVIEIDMVFDDPNAAGTVIETAVVNCRARLLRDNARSST.

54-61 contacts ATP; the sequence is TVGGAGKT.

Belongs to the LpxK family.

The enzyme catalyses a lipid A disaccharide + ATP = a lipid IVA + ADP + H(+). It functions in the pathway glycolipid biosynthesis; lipid IV(A) biosynthesis; lipid IV(A) from (3R)-3-hydroxytetradecanoyl-[acyl-carrier-protein] and UDP-N-acetyl-alpha-D-glucosamine: step 6/6. Transfers the gamma-phosphate of ATP to the 4'-position of a tetraacyldisaccharide 1-phosphate intermediate (termed DS-1-P) to form tetraacyldisaccharide 1,4'-bis-phosphate (lipid IVA). The chain is Tetraacyldisaccharide 4'-kinase from Agrobacterium fabrum (strain C58 / ATCC 33970) (Agrobacterium tumefaciens (strain C58)).